The chain runs to 443 residues: Thymidine phosphorylase (443 aa).

Belongs to the thymidine/pyrimidine-nucleoside phosphorylase family. Homodimer.

It catalyses the reaction thymidine + phosphate = 2-deoxy-alpha-D-ribose 1-phosphate + thymine. Its pathway is pyrimidine metabolism; dTMP biosynthesis via salvage pathway; dTMP from thymine: step 1/2. Its function is as follows. The enzymes which catalyze the reversible phosphorolysis of pyrimidine nucleosides are involved in the degradation of these compounds and in their utilization as carbon and energy sources, or in the rescue of pyrimidine bases for nucleotide synthesis. In Aeromonas hydrophila subsp. hydrophila (strain ATCC 7966 / DSM 30187 / BCRC 13018 / CCUG 14551 / JCM 1027 / KCTC 2358 / NCIMB 9240 / NCTC 8049), this protein is Thymidine phosphorylase.